Here is a 198-residue protein sequence, read N- to C-terminus: Protein GrpE (198 aa).

It belongs to the GrpE family. In terms of assembly, homodimer.

It is found in the cytoplasm. Its function is as follows. Participates actively in the response to hyperosmotic and heat shock by preventing the aggregation of stress-denatured proteins, in association with DnaK and GrpE. It is the nucleotide exchange factor for DnaK and may function as a thermosensor. Unfolded proteins bind initially to DnaJ; upon interaction with the DnaJ-bound protein, DnaK hydrolyzes its bound ATP, resulting in the formation of a stable complex. GrpE releases ADP from DnaK; ATP binding to DnaK triggers the release of the substrate protein, thus completing the reaction cycle. Several rounds of ATP-dependent interactions between DnaJ, DnaK and GrpE are required for fully efficient folding. This chain is Protein GrpE, found in Actinobacillus pleuropneumoniae serotype 3 (strain JL03).